Reading from the N-terminus, the 207-residue chain is Holliday junction branch migration complex subunit RuvA (207 aa).

The interval 1–65 is domain I; that stretch reads MYDYIRGTLT…ETEHLLYGFH (65 aa). The tract at residues 66 to 144 is domain II; sequence SREERECFRI…DLLPLDSRVE (79 aa). The interval 145–150 is flexible linker; the sequence is TSQTHT. Residues 150-207 are domain III; that stretch reads TTSSCLEEGIQALAALGYSKIAAERMIAEAIKDLPEGSSLTDILPIALKKNFSGVNKD.

It belongs to the RuvA family. In terms of assembly, homotetramer. Forms an RuvA(8)-RuvB(12)-Holliday junction (HJ) complex. HJ DNA is sandwiched between 2 RuvA tetramers; dsDNA enters through RuvA and exits via RuvB. An RuvB hexamer assembles on each DNA strand where it exits the tetramer. Each RuvB hexamer is contacted by two RuvA subunits (via domain III) on 2 adjacent RuvB subunits; this complex drives branch migration. In the full resolvosome a probable DNA-RuvA(4)-RuvB(12)-RuvC(2) complex forms which resolves the HJ.

The protein localises to the cytoplasm. Functionally, the RuvA-RuvB-RuvC complex processes Holliday junction (HJ) DNA during genetic recombination and DNA repair, while the RuvA-RuvB complex plays an important role in the rescue of blocked DNA replication forks via replication fork reversal (RFR). RuvA specifically binds to HJ cruciform DNA, conferring on it an open structure. The RuvB hexamer acts as an ATP-dependent pump, pulling dsDNA into and through the RuvAB complex. HJ branch migration allows RuvC to scan DNA until it finds its consensus sequence, where it cleaves and resolves the cruciform DNA. This is Holliday junction branch migration complex subunit RuvA from Chlamydia pneumoniae (Chlamydophila pneumoniae).